A 485-amino-acid chain; its full sequence is Glutamyl-tRNA(Gln) amidotransferase subunit A (485 aa).

Active-site charge relay system residues include K79 and S154. S178 (acyl-ester intermediate) is an active-site residue.

It belongs to the amidase family. GatA subfamily. As to quaternary structure, heterotrimer of A, B and C subunits.

It catalyses the reaction L-glutamyl-tRNA(Gln) + L-glutamine + ATP + H2O = L-glutaminyl-tRNA(Gln) + L-glutamate + ADP + phosphate + H(+). Its function is as follows. Allows the formation of correctly charged Gln-tRNA(Gln) through the transamidation of misacylated Glu-tRNA(Gln) in organisms which lack glutaminyl-tRNA synthetase. The reaction takes place in the presence of glutamine and ATP through an activated gamma-phospho-Glu-tRNA(Gln). This chain is Glutamyl-tRNA(Gln) amidotransferase subunit A, found in Persephonella marina (strain DSM 14350 / EX-H1).